A 419-amino-acid chain; its full sequence is Homeobox-containing protein 1 (419 aa).

An HNF-p1 domain is found at 18 to 49; it reads DEPRFTIEQIDLLQRLRRTGMTKHEILHALET. Residues 56-152 form a disordered region; sequence EHSDKFGRRS…GQRSYSFEAS (97 aa). K60 participates in a covalent cross-link: Glycyl lysine isopeptide (Lys-Gly) (interchain with G-Cter in SUMO2). 2 stretches are compositionally biased toward low complexity: residues 64-73 and 81-93; these read RSSYGGSSYG and ASSS…TQTQ. The segment covering 94–132 has biased composition (polar residues); that stretch reads HSGMSPSPSNSYDTSPLPCTTNQNGRENNDRLSTSNGKM. K131 is covalently cross-linked (Glycyl lysine isopeptide (Lys-Gly) (interchain with G-Cter in SUMO2)). Residues 145–241 enclose the POU-specific atypical domain; the sequence is RSYSFEASEE…PGATLSMRPA (97 aa). A Phosphoserine modification is found at S148. K161 is covalently cross-linked (Glycyl lysine isopeptide (Lys-Gly) (interchain with G-Cter in SUMO2)). S170 bears the Phosphoserine mark. Residues K174, K217, and K310 each participate in a glycyl lysine isopeptide (Lys-Gly) (interchain with G-Cter in SUMO2) cross-link. Positions 267 to 341 form a DNA-binding region, homeobox; sequence RRGSRFTWRK…NRRKEIKRRA (75 aa). A disordered region spans residues 352-384; it reads IDVQSPGGHSNSDDVDGNDYSEQDDSTSHSDHQ. Residues 364-376 show a composition bias toward acidic residues; the sequence is DDVDGNDYSEQDD. K412 participates in a covalent cross-link: Glycyl lysine isopeptide (Lys-Gly) (interchain with G-Cter in SUMO1); alternate. A Glycyl lysine isopeptide (Lys-Gly) (interchain with G-Cter in SUMO2); alternate cross-link involves residue K412.

In terms of assembly, associates with the telomerase holoenzyme complex. Interacts with DKC1, XRCC6 and COIL.

The protein resides in the nucleus. The protein localises to the cytoplasm. It localises to the chromosome. Its subcellular location is the telomere. It is found in the cajal body. The protein resides in the PML body. Functionally, binds directly to 5'-TTAGGG-3' repeats in telomeric DNA. Associates with the telomerase complex at sites of active telomere processing and positively regulates telomere elongation. Important for TERT binding to chromatin, indicating a role in recruitment of the telomerase complex to telomeres. Also plays a role in the alternative lengthening of telomeres (ALT) pathway in telomerase-negative cells where it promotes formation and/or maintenance of ALT-associated promyelocytic leukemia bodies (APBs). Enhances formation of telomere C-circles in ALT cells, suggesting a possible role in telomere recombination. Might also be involved in the DNA damage response at telomeres. The sequence is that of Homeobox-containing protein 1 (Hmbox1) from Mus musculus (Mouse).